Reading from the N-terminus, the 316-residue chain is Ribosomal RNA small subunit methyltransferase H (316 aa).

Residues 37-39, Asp56, Phe83, Asp106, and His113 each bind S-adenosyl-L-methionine; that span reads GGH. The tract at residues 276–316 is disordered; the sequence is PILPSEEETKENPASRSAKLRVLRKTKSADKKYKKENSKEE. The segment covering 302 to 316 has biased composition (basic and acidic residues); the sequence is KSADKKYKKENSKEE.

It belongs to the methyltransferase superfamily. RsmH family.

It localises to the cytoplasm. The catalysed reaction is cytidine(1402) in 16S rRNA + S-adenosyl-L-methionine = N(4)-methylcytidine(1402) in 16S rRNA + S-adenosyl-L-homocysteine + H(+). Specifically methylates the N4 position of cytidine in position 1402 (C1402) of 16S rRNA. This chain is Ribosomal RNA small subunit methyltransferase H, found in Leptospira borgpetersenii serovar Hardjo-bovis (strain JB197).